The sequence spans 256 residues: tRNA pseudouridine synthase A (256 aa).

The Nucleophile role is filled by D52. Substrate is bound at residue Y110.

It belongs to the tRNA pseudouridine synthase TruA family. As to quaternary structure, homodimer.

The enzyme catalyses uridine(38/39/40) in tRNA = pseudouridine(38/39/40) in tRNA. Functionally, formation of pseudouridine at positions 38, 39 and 40 in the anticodon stem and loop of transfer RNAs. In Stenotrophomonas maltophilia (strain K279a), this protein is tRNA pseudouridine synthase A.